A 95-amino-acid polypeptide reads, in one-letter code: Co-chaperonin GroES (95 aa).

It belongs to the GroES chaperonin family. In terms of assembly, heptamer of 7 subunits arranged in a ring. Interacts with the chaperonin GroEL.

It is found in the cytoplasm. Its function is as follows. Together with the chaperonin GroEL, plays an essential role in assisting protein folding. The GroEL-GroES system forms a nano-cage that allows encapsulation of the non-native substrate proteins and provides a physical environment optimized to promote and accelerate protein folding. GroES binds to the apical surface of the GroEL ring, thereby capping the opening of the GroEL channel. This is Co-chaperonin GroES from Dichelobacter nodosus (strain VCS1703A).